A 196-amino-acid chain; its full sequence is uncharacterized protein (196 aa).

Residues 71–87 form a helical membrane-spanning segment; sequence YVKLIGTGCYVAILISG.

It is found in the membrane. This is an uncharacterized protein from Dictyostelium discoideum (Social amoeba).